A 125-amino-acid polypeptide reads, in one-letter code: Large ribosomal subunit protein mL51 (125 aa).

The transit peptide at 1 to 29 directs the protein to the mitochondrion; the sequence is MWSVQKLLWGCRSLLPQGCRSFSLGNRDL.

It belongs to the mitochondrion-specific ribosomal protein mL51 family. In terms of assembly, component of the mitochondrial ribosome large subunit (39S) which comprises a 16S rRNA and about 50 distinct proteins.

It localises to the mitochondrion. This Xenopus laevis (African clawed frog) protein is Large ribosomal subunit protein mL51 (mrpl51).